The sequence spans 940 residues: Isoleucine--tRNA ligase (940 aa).

Positions 58–68 match the 'HIGH' region motif; that stretch reads PYANGAIHIGH. Residue Glu564 coordinates L-isoleucyl-5'-AMP. The short motif at 605-609 is the 'KMSKS' region element; it reads KMSKS. Lys608 serves as a coordination point for ATP. Cys903, Cys906, Cys923, and Cys926 together coordinate Zn(2+).

This sequence belongs to the class-I aminoacyl-tRNA synthetase family. IleS type 1 subfamily. Monomer. Zn(2+) is required as a cofactor.

The protein resides in the cytoplasm. The enzyme catalyses tRNA(Ile) + L-isoleucine + ATP = L-isoleucyl-tRNA(Ile) + AMP + diphosphate. Its function is as follows. Catalyzes the attachment of isoleucine to tRNA(Ile). As IleRS can inadvertently accommodate and process structurally similar amino acids such as valine, to avoid such errors it has two additional distinct tRNA(Ile)-dependent editing activities. One activity is designated as 'pretransfer' editing and involves the hydrolysis of activated Val-AMP. The other activity is designated 'posttransfer' editing and involves deacylation of mischarged Val-tRNA(Ile). The sequence is that of Isoleucine--tRNA ligase from Nitrosococcus oceani (strain ATCC 19707 / BCRC 17464 / JCM 30415 / NCIMB 11848 / C-107).